The primary structure comprises 1002 residues: Mitogen-activated protein kinase kinase kinase 21 (1002 aa).

The disordered stretch occupies residues 1 to 26; it reads MALPVAEGTADTPLSPARDDSGSTSS. In terms of domain architecture, SH3 spans 24–88; it reads TSSGMWAALY…PASYVAPCGP (65 aa). Residues 110–390 form the Protein kinase domain; it reads LELKELIGAG…QLTAIEEAVL (281 aa). Residues 116-124 and Lys-137 each bind ATP; that span reads IGAGGFGQV. Catalysis depends on Asp-247, which acts as the Proton acceptor. Thr-283 carries the phosphothreonine; by autocatalysis modification. Ser-287 bears the Phosphoserine; by autocatalysis and MAP4K1 mark. Leucine-zipper regions lie at residues 409–430 and 444–466; these read IQQM…EEEL and LRRR…LNVL. Disordered stretches follow at residues 508 to 531, 574 to 604, 640 to 689, 721 to 778, 797 to 823, and 878 to 899; these read TVQA…PPGS, GCTW…NSPW, HRKP…VGAP, AQAP…SHSS, LGNA…SGCE, and QSAP…RDLA. 3 positions are modified to phosphoserine: Ser-512, Ser-527, and Ser-531. Thr-576 is modified (phosphothreonine). Residues 584 to 596 show a composition bias toward basic and acidic residues; sequence TKERPEGRERVRP. At Ser-598 the chain carries Phosphoserine. The span at 661–677 shows a compositional bias: basic and acidic residues; the sequence is DSQREDSSEAESREEGS. 2 stretches are compositionally biased toward low complexity: residues 740 to 758 and 766 to 778; these read QPAS…QPSA and STLL…SHSS.

Belongs to the protein kinase superfamily. STE Ser/Thr protein kinase family. MAP kinase kinase kinase subfamily. As to quaternary structure, homodimer. Interacts with TLR4. Mg(2+) serves as cofactor. Autophosphorylation on serine and threonine residues within the activation loop plays a role in enzyme activation.

The catalysed reaction is L-seryl-[protein] + ATP = O-phospho-L-seryl-[protein] + ADP + H(+). It catalyses the reaction L-threonyl-[protein] + ATP = O-phospho-L-threonyl-[protein] + ADP + H(+). With respect to regulation, homodimerization via the leucine zipper domains is required for autophosphorylation and subsequent activation. Its function is as follows. Negative regulator of TLR4 signaling. Does not activate JNK1/MAPK8 pathway, p38/MAPK14, nor ERK2/MAPK1 pathways. In Mus musculus (Mouse), this protein is Mitogen-activated protein kinase kinase kinase 21 (Map3k21).